Here is a 157-residue protein sequence, read N- to C-terminus: Endoribonuclease YbeY (157 aa).

Positions 118, 122, and 128 each coordinate Zn(2+).

The protein belongs to the endoribonuclease YbeY family. It depends on Zn(2+) as a cofactor.

The protein localises to the cytoplasm. Its function is as follows. Single strand-specific metallo-endoribonuclease involved in late-stage 70S ribosome quality control and in maturation of the 3' terminus of the 16S rRNA. The sequence is that of Endoribonuclease YbeY from Bordetella bronchiseptica (strain ATCC BAA-588 / NCTC 13252 / RB50) (Alcaligenes bronchisepticus).